The chain runs to 207 residues: A disintegrin and metalloproteinase with thrombospondin motifs 5 (207 aa).

In terms of domain architecture, Peptidase M12B spans 1-74 (HAAFTVAHEI…GHGNCLLDLP (74 aa)). His8 contacts Zn(2+). Glu9 is a catalytic residue. Zn(2+)-binding residues include His12 and His18. Disulfide bonds link Cys24–Cys53, Cys95–Cys117, Cys106–Cys127, Cys112–Cys146, and Cys140–Cys151. The Disintegrin domain maps to 83–164 (ELPGQTYDAS…TKKKYYSTSS (82 aa)). Asn96 carries an N-linked (GlcNAc...) asparagine glycan. A TSP type-1 domain is found at 165–205 (HGNWGSWGSWGQCSRSCGGGVQFAYRHCNNPAPKNNGRYCT). Residues Trp168 and Trp171 are each glycosylated (C-linked (Man) tryptophan). O-linked (Fuc...) serine glycosylation occurs at Ser180.

It depends on Zn(2+) as a cofactor. In terms of processing, the precursor is cleaved by furin and PCSK7 outside of the cell. Glycosylated. Can be O-fucosylated by POFUT2 on a serine or a threonine residue found within the consensus sequence C1-X(2)-(S/T)-C2-G of the TSP type-1 repeat domains where C1 and C2 are the first and second cysteine residue of the repeat, respectively. Fucosylated repeats can then be further glycosylated by the addition of a beta-1,3-glucose residue by the glucosyltransferase, B3GALTL. Fucosylation mediates the efficient secretion of ADAMTS family members. Can also be C-glycosylated with one or two mannose molecules on tryptophan residues within the consensus sequence W-X-X-W of the TPRs, and N-glycosylated. These other glycosylations can also facilitate secretion.

It localises to the secreted. The protein localises to the extracellular space. Its subcellular location is the extracellular matrix. Its function is as follows. Metalloproteinase that plays an important role in connective tissue organization, development, inflammation and cell migration. Extracellular matrix (ECM) degrading enzyme that shows proteolytic activity toward the hyalectan group of chondroitin sulfate proteoglycans (CSPGs) including ACAN, VCAN, BCAN and NCAN. Cleavage within the hyalectans occurs at Glu-Xaa recognition motifs. Plays a role in embryonic development, including limb and cardiac morphogenesis, and skeletal muscle development through its VCAN remodeling properties. Cleaves VCAN in the pericellular matrix surrounding myoblasts, facilitating myoblast contact and fusion which is required for skeletal muscle development and regeneration. Participates in the development of brown adipose tissue and browning of white adipose tissue. Plays an important role for T-lymphocyte migration from draining lymph nodes following viral infection. The chain is A disintegrin and metalloproteinase with thrombospondin motifs 5 (ADAMTS5) from Bos taurus (Bovine).